The primary structure comprises 109 residues: Flagellar hook-basal body complex protein FliE (109 aa).

Residues 1 to 38 (MQAIHNDKSLLSPFSELNTDNRTQREESGSTFKEQKGG) are disordered. Basic and acidic residues predominate over residues 22–38 (RTQREESGSTFKEQKGG).

This sequence belongs to the FliE family.

It is found in the bacterial flagellum basal body. The protein is Flagellar hook-basal body complex protein FliE of Helicobacter acinonychis (strain Sheeba).